The sequence spans 186 residues: Probable RNA 2'-phosphotransferase (186 aa).

The protein belongs to the KptA/TPT1 family.

Removes the 2'-phosphate from RNA via an intermediate in which the phosphate is ADP-ribosylated by NAD followed by a presumed transesterification to release the RNA and generate ADP-ribose 1''-2''-cyclic phosphate (APPR&gt;P). May function as an ADP-ribosylase. The chain is Probable RNA 2'-phosphotransferase from Pectobacterium carotovorum subsp. carotovorum (strain PC1).